Reading from the N-terminus, the 162-residue chain is MKIVVIQGPNLNMLGIREQNIYGPMKLEDIHKQMKGFAEQNKLEIEFFQSNLEGEIVDRIQECIGDADGIIINPAAYTHTSIAIRDAIAAVQLPTLEVHLSNIHQREEFRHKSLIAPVCAGQIVGMGPFGYHLAMVGMTQILSEVAAMREQQAKAQAAAQQK.

The active-site Proton acceptor is tyrosine 22. Substrate is bound by residues asparagine 73, histidine 79, and aspartate 86. Histidine 99 serves as the catalytic Proton donor. Substrate is bound by residues 100 to 101 (LS) and arginine 110.

Belongs to the type-II 3-dehydroquinase family. In terms of assembly, homododecamer.

It catalyses the reaction 3-dehydroquinate = 3-dehydroshikimate + H2O. The protein operates within metabolic intermediate biosynthesis; chorismate biosynthesis; chorismate from D-erythrose 4-phosphate and phosphoenolpyruvate: step 3/7. Its function is as follows. Catalyzes a trans-dehydration via an enolate intermediate. This Sulfurovum sp. (strain NBC37-1) protein is 3-dehydroquinate dehydratase.